The primary structure comprises 1060 residues: Carbamoyl phosphate synthase large chain (1060 aa).

A carboxyphosphate synthetic domain region spans residues 1–401 (MPKRTDIRKI…SLLKACRSLE (401 aa)). ATP-binding residues include Arg-129, Arg-169, Gly-175, Gly-176, Arg-208, Ile-210, Glu-215, Gly-241, Ile-242, His-243, Gln-284, and Glu-298. Residues 133–327 (KQLMEELNQP…IAKLAAKIAV (195 aa)) enclose the ATP-grasp 1 domain. Mg(2+) is bound by residues Gln-284, Glu-298, and Asn-300. 3 residues coordinate Mn(2+): Gln-284, Glu-298, and Asn-300. The tract at residues 402-546 (IGVDHIKIAD…YSTYAVENES (145 aa)) is oligomerization domain. Residues 547 to 929 (LISDKASILV…ALYKAFEAAY (383 aa)) form a carbamoyl phosphate synthetic domain region. The 191-residue stretch at 671 to 861 (EATLQALNIP…MAQVATKVIL (191 aa)) folds into the ATP-grasp 2 domain. 10 residues coordinate ATP: Arg-707, Ala-746, Leu-748, Glu-752, Gly-777, Val-778, His-779, Ser-780, Gln-820, and Glu-832. Gln-820, Glu-832, and Asn-834 together coordinate Mg(2+). Mn(2+) contacts are provided by Gln-820, Glu-832, and Asn-834. The 131-residue stretch at 930-1060 (LHMPDYGNIV…SRAFTLKVLD (131 aa)) folds into the MGS-like domain. The segment at 930–1060 (LHMPDYGNIV…SRAFTLKVLD (131 aa)) is allosteric domain.

This sequence belongs to the CarB family. In terms of assembly, composed of two chains; the small (or glutamine) chain promotes the hydrolysis of glutamine to ammonia, which is used by the large (or ammonia) chain to synthesize carbamoyl phosphate. Tetramer of heterodimers (alpha,beta)4. The cofactor is Mg(2+). Mn(2+) serves as cofactor.

The enzyme catalyses hydrogencarbonate + L-glutamine + 2 ATP + H2O = carbamoyl phosphate + L-glutamate + 2 ADP + phosphate + 2 H(+). The catalysed reaction is hydrogencarbonate + NH4(+) + 2 ATP = carbamoyl phosphate + 2 ADP + phosphate + 2 H(+). Its pathway is amino-acid biosynthesis; L-arginine biosynthesis; carbamoyl phosphate from bicarbonate: step 1/1. It participates in pyrimidine metabolism; UMP biosynthesis via de novo pathway; (S)-dihydroorotate from bicarbonate: step 1/3. Its function is as follows. Large subunit of the glutamine-dependent carbamoyl phosphate synthetase (CPSase). CPSase catalyzes the formation of carbamoyl phosphate from the ammonia moiety of glutamine, carbonate, and phosphate donated by ATP, constituting the first step of 2 biosynthetic pathways, one leading to arginine and/or urea and the other to pyrimidine nucleotides. The large subunit (synthetase) binds the substrates ammonia (free or transferred from glutamine from the small subunit), hydrogencarbonate and ATP and carries out an ATP-coupled ligase reaction, activating hydrogencarbonate by forming carboxy phosphate which reacts with ammonia to form carbamoyl phosphate. The protein is Carbamoyl phosphate synthase large chain of Streptococcus agalactiae serotype V (strain ATCC BAA-611 / 2603 V/R).